The primary structure comprises 239 residues: Biosynthetic peptidoglycan transglycosylase (239 aa).

The chain crosses the membrane as a helical span at residues 29–49 (GMFGLGALMLVWIVAYAVVPV).

It belongs to the glycosyltransferase 51 family.

It is found in the cell inner membrane. It catalyses the reaction [GlcNAc-(1-&gt;4)-Mur2Ac(oyl-L-Ala-gamma-D-Glu-L-Lys-D-Ala-D-Ala)](n)-di-trans,octa-cis-undecaprenyl diphosphate + beta-D-GlcNAc-(1-&gt;4)-Mur2Ac(oyl-L-Ala-gamma-D-Glu-L-Lys-D-Ala-D-Ala)-di-trans,octa-cis-undecaprenyl diphosphate = [GlcNAc-(1-&gt;4)-Mur2Ac(oyl-L-Ala-gamma-D-Glu-L-Lys-D-Ala-D-Ala)](n+1)-di-trans,octa-cis-undecaprenyl diphosphate + di-trans,octa-cis-undecaprenyl diphosphate + H(+). Its pathway is cell wall biogenesis; peptidoglycan biosynthesis. Functionally, peptidoglycan polymerase that catalyzes glycan chain elongation from lipid-linked precursors. The chain is Biosynthetic peptidoglycan transglycosylase from Jannaschia sp. (strain CCS1).